The following is a 457-amino-acid chain: Vasoactive intestinal polypeptide receptor 1 (457 aa).

The signal sequence occupies residues 1–30 (MRPPSPLPARWLCVLAGALAWALGPAGGQA). The Extracellular segment spans residues 31–141 (ARLQEECDYV…DEQQTMFYGS (111 aa)). 5 cysteine pairs are disulfide-bonded: Cys-37–Cys-208, Cys-50–Cys-72, Cys-63–Cys-105, Cys-86–Cys-122, and Cys-215–Cys-285. 3 N-linked (GlcNAc...) asparagine glycosylation sites follow: Asn-58, Asn-69, and Asn-100. Residues 142–166 (VKTGYTIGYGLSLATLLVATAILSL) traverse the membrane as a helical segment. Residues 167–174 (FRKLHCTR) are Cytoplasmic-facing. A helical transmembrane segment spans residues 175 to 196 (NYIHMHLFISFILRAAAVFIKD). Residues 197–216 (LALFDSGESDQCSEGSVGCK) lie on the Extracellular side of the membrane. The helical transmembrane segment at 217–241 (AAMVFFQYCVMANFFWLLVEGLYLY) threads the bilayer. The Cytoplasmic segment spans residues 242–254 (TLLAVSFFSERKY). Residues 255-276 (FWGYILIGWGVPSTFTMVWTIA) form a helical membrane-spanning segment. Topologically, residues 277-291 (RIHFEDYGCWDTINS) are extracellular. Asn-290 is a glycosylation site (N-linked (GlcNAc...) asparagine). The helical transmembrane segment at 292 to 316 (SLWWIIKGPILTSILVNFILFICII) threads the bilayer. The Cytoplasmic portion of the chain corresponds to 317 to 338 (RILLQKLRPPDIRKSDSSPYSR). A helical transmembrane segment spans residues 339–359 (LARSTLLLIPLFGVHYIMFAF). Over 360 to 367 (FPDNFKPE) the chain is Extracellular. A helical membrane pass occupies residues 368-391 (VKMVFELVVGSFQGFVVAILYCFL). Topologically, residues 392 to 457 (NGEVQAELRR…SSFQAEVSLV (66 aa)) are cytoplasmic.

Belongs to the G-protein coupled receptor 2 family. In terms of assembly, interacts with ADCYAP1/PACAP; activated by both PACAP27 and PACAP38 neuropeptides. Interacts with VIP; the interaction results in VIPR1 activation. As to expression, in lung, HT-29 colonic epithelial cells, Raji B-lymphoblasts. Lesser extent in brain, heart, kidney, liver and placenta. Not expressed in CD4+ or CD8+ T-cells. Expressed in the T-cell lines HARRIS, HuT 78, Jurkat and SUP-T1, but not in the T-cell lines Peer, MOLT-4, HSB and YT.

It is found in the cell membrane. In terms of biological role, g protein-coupled receptor activated by the neuropeptides vasoactive intestinal peptide (VIP) and pituitary adenylate cyclase-activating polypeptide (ADCYAP1/PACAP). Binds VIP and both PACAP27 and PACAP38 bioactive peptides with the following order of ligand affinity VIP = PACAP27 &gt; PACAP38. Ligand binding causes a conformation change that triggers signaling via guanine nucleotide-binding proteins (G proteins) and modulates the activity of downstream effectors. Activates cAMP-dependent pathway. In Homo sapiens (Human), this protein is Vasoactive intestinal polypeptide receptor 1.